We begin with the raw amino-acid sequence, 163 residues long: Neurotrophin-3 (163 aa).

Residues 1-3 (IQS) form the signal peptide. Residues 4-119 (TSMDQGILTE…VLNRTSRRKR (116 aa)) constitute a propeptide that is removed on maturation. N-linked (GlcNAc...) asparagine glycosylation is present at Asn112.

It belongs to the NGF-beta family.

The protein resides in the secreted. Functionally, seems to promote the survival of visceral and proprioceptive sensory neurons. The sequence is that of Neurotrophin-3 (NTF3) from Epicrates cenchria (Rainbow boa).